The sequence spans 615 residues: Zinc metalloproteinase-disintegrin-like (615 aa).

The N-terminal stretch at 1–20 is a signal peptide; it reads MIQALLVTICLVGFPHQGSS. A propeptide spanning residues 21-195 is cleaved from the precursor; the sequence is IILESGNVKD…KMNFQSANNP (175 aa). The 197-residue stretch at 204 to 400 folds into the Peptidase M12B domain; the sequence is KYIKLAVVVD…DLPQCILNKP (197 aa). 3 disulfides stabilise this stretch: Cys315–Cys395, Cys355–Cys379, and Cys357–Cys362. His340 lines the Zn(2+) pocket. Glu341 is an active-site residue. Zn(2+) contacts are provided by His344 and His350. A Disintegrin domain is found at 408-494; that stretch reads PAVCGNNFVE…DCPMDGLQRN (87 aa). The Ca(2+) site is built by Val410, Asn413, Phe415, Glu417, and Asp423. Cystine bridges form between Cys411/Cys440, Cys422/Cys435, Cys424/Cys430, Cys434/Cys457, Cys448/Cys454, Cys453/Cys479, Cys466/Cys486, Cys473/Cys505, Cys498/Cys510, Cys517/Cys567, Cys532/Cys576, Cys545/Cys555, Cys562/Cys602, and Cys596/Cys608. Positions 472–474 match the D/ECD-tripeptide motif; it reads DCD.

Belongs to the venom metalloproteinase (M12B) family. P-III subfamily. P-IIIa sub-subfamily. In terms of assembly, monomer. Requires Zn(2+) as cofactor. In terms of tissue distribution, expressed by the venom gland.

It is found in the secreted. In terms of biological role, snake venom zinc metalloprotease that may induce platelet aggregation. This Cerberus rynchops (Dog-faced water snake) protein is Zinc metalloproteinase-disintegrin-like.